Consider the following 348-residue polypeptide: Sulfate/thiosulfate import ATP-binding protein CysA (348 aa).

The ABC transporter domain maps to Ile3–Val237. Gly35 to Thr42 serves as a coordination point for ATP.

The protein belongs to the ABC transporter superfamily. Sulfate/tungstate importer (TC 3.A.1.6) family. As to quaternary structure, the complex is composed of two ATP-binding proteins (CysA), two transmembrane proteins (CysT and CysW) and a solute-binding protein (CysP).

It is found in the cell inner membrane. The catalysed reaction is sulfate(out) + ATP + H2O = sulfate(in) + ADP + phosphate + H(+). It catalyses the reaction thiosulfate(out) + ATP + H2O = thiosulfate(in) + ADP + phosphate + H(+). Functionally, part of the ABC transporter complex CysAWTP involved in sulfate/thiosulfate import. Responsible for energy coupling to the transport system. The chain is Sulfate/thiosulfate import ATP-binding protein CysA from Xylella fastidiosa (strain Temecula1 / ATCC 700964).